A 167-amino-acid chain; its full sequence is S-ribosylhomocysteine lyase (167 aa).

Residues His-54, His-58, and Cys-128 each coordinate Fe cation.

The protein belongs to the LuxS family. In terms of assembly, homodimer. It depends on Fe cation as a cofactor.

The catalysed reaction is S-(5-deoxy-D-ribos-5-yl)-L-homocysteine = (S)-4,5-dihydroxypentane-2,3-dione + L-homocysteine. Its function is as follows. Involved in the synthesis of autoinducer 2 (AI-2) which is secreted by bacteria and is used to communicate both the cell density and the metabolic potential of the environment. The regulation of gene expression in response to changes in cell density is called quorum sensing. Catalyzes the transformation of S-ribosylhomocysteine (RHC) to homocysteine (HC) and 4,5-dihydroxy-2,3-pentadione (DPD). The protein is S-ribosylhomocysteine lyase of Haemophilus influenzae (strain PittEE).